The chain runs to 177 residues: ATP-dependent protease subunit HslV (177 aa).

Thr-2 is an active-site residue. Positions 159, 162, and 165 each coordinate Na(+).

This sequence belongs to the peptidase T1B family. HslV subfamily. A double ring-shaped homohexamer of HslV is capped on each side by a ring-shaped HslU homohexamer. The assembly of the HslU/HslV complex is dependent on binding of ATP.

It localises to the cytoplasm. The enzyme catalyses ATP-dependent cleavage of peptide bonds with broad specificity.. Its activity is regulated as follows. Allosterically activated by HslU binding. Functionally, protease subunit of a proteasome-like degradation complex believed to be a general protein degrading machinery. The sequence is that of ATP-dependent protease subunit HslV from Lactobacillus leichmannii.